Here is a 397-residue protein sequence, read N- to C-terminus: Glia-derived nexin (397 aa).

The first 19 residues, 1-19, serve as a signal peptide directing secretion; the sequence is MNWHFPFFILTTVTLSSVY. A glycan (N-linked (GlcNAc...) asparagine) is linked at asparagine 159.

Belongs to the serpin family.

It localises to the secreted. The protein resides in the extracellular space. In terms of biological role, serine protease inhibitor with activity toward thrombin, trypsin, and urokinase. Promotes neurite extension by inhibiting thrombin. Binds heparin. The sequence is that of Glia-derived nexin (Serpine2) from Rattus norvegicus (Rat).